The chain runs to 259 residues: O-antigen export system permease protein RfbA (259 aa).

The next 6 membrane-spanning stretches (helical) occupy residues 33–53, 73–95, 111–131, 142–162, 176–196, and 228–248; these read FGYLWSIANPLLFAMIYYFIF, FPWQWFASSATNSLFSFIANAQI, VMMEGLHFLCTIPVIIAFLFV, WGIPIIAIGQVIFTFGISIIF, VSLGIMLMFYCTPILYASDMI, and EYISILYITGFILTIVGLAIF. An ABC transmembrane type-2 domain is found at 33–251; the sequence is FGYLWSIANP…IVGLAIFNKL (219 aa).

This sequence belongs to the ABC-2 integral membrane protein family.

The protein resides in the cell inner membrane. Functionally, may form an ATP-driven O-antigen export apparatus, in association with RfbB. The polypeptide is O-antigen export system permease protein RfbA (rfbA) (Klebsiella pneumoniae).